The primary structure comprises 466 residues: Ribulose bisphosphate carboxylase large chain (466 aa).

At Lys-4 the chain carries N6,N6,N6-trimethyllysine. Substrate contacts are provided by Asn-113 and Thr-163. Residue Lys-165 is the Proton acceptor of the active site. Residue Lys-167 coordinates substrate. Residues Lys-191, Asp-193, and Glu-194 each coordinate Mg(2+). Lys-191 carries the post-translational modification N6-carboxylysine. His-284 (proton acceptor) is an active-site residue. Residues Arg-285, His-317, and Ser-369 each contribute to the substrate site.

Belongs to the RuBisCO large chain family. Type I subfamily. Heterohexadecamer of 8 large chains and 8 small chains; disulfide-linked. The disulfide link is formed within the large subunit homodimers. The cofactor is Mg(2+). In terms of processing, the disulfide bond which can form in the large chain dimeric partners within the hexadecamer appears to be associated with oxidative stress and protein turnover.

The protein resides in the plastid. It localises to the chloroplast. The catalysed reaction is 2 (2R)-3-phosphoglycerate + 2 H(+) = D-ribulose 1,5-bisphosphate + CO2 + H2O. It carries out the reaction D-ribulose 1,5-bisphosphate + O2 = 2-phosphoglycolate + (2R)-3-phosphoglycerate + 2 H(+). In terms of biological role, ruBisCO catalyzes two reactions: the carboxylation of D-ribulose 1,5-bisphosphate, the primary event in carbon dioxide fixation, as well as the oxidative fragmentation of the pentose substrate in the photorespiration process. Both reactions occur simultaneously and in competition at the same active site. The chain is Ribulose bisphosphate carboxylase large chain from Barleria prionitis (Porcupine flower).